Consider the following 147-residue polypeptide: Leghemoglobin-1 (147 aa).

The Globin domain occupies 2 to 147 (SFTDKQEALV…LATAIKKAMS (146 aa)). A nitrated tyrosine mark is found at Y25 and Y30. Position 45 (S45) interacts with heme b. At S45 the chain carries Phosphoserine. Position 62 (H62) interacts with O2. K65, H94, and K97 together coordinate heme b. At Y135 the chain carries Nitrated tyrosine.

It belongs to the plant globin family. Monomer. In terms of processing, nitrated in effective nodules and particularly in hypoxic conditions; this mechanism may play a protective role in the symbiosis by buffering toxic peroxynitrite NO(2)(-). Nitration level decrease during nodule senescence. Phosphorylation at Ser-45 disrupts the molecular environment of its porphyrin ring oxygen binding pocket, thus leading to a reduced oxygen consumption and to the delivery of oxygen O(2) to symbiosomes. In terms of tissue distribution, root nodules.

It localises to the cytoplasm. The protein resides in the cytosol. Its subcellular location is the nucleus. Functionally, leghemoglobin that reversibly binds oxygen O(2) through a pentacoordinated heme iron. In root nodules, facilitates the diffusion of oxygen to the bacteroids while preventing the bacterial nitrogenase from being inactivated by buffering dioxygen, nitric oxide and carbon monoxide, and promoting the formation of reactive oxygen species (ROS, e.g. H(2)O(2)). This role is essential for symbiotic nitrogen fixation (SNF). This Medicago sativa (Alfalfa) protein is Leghemoglobin-1.